The primary structure comprises 217 residues: Dihydroflavonol 4-reductase (217 aa).

NADP(+) contacts are provided by Lys-27 and Tyr-146.

Belongs to the NAD(P)-dependent epimerase/dehydratase family. Dihydroflavonol-4-reductase subfamily.

The catalysed reaction is a (2R,3S,4S)-leucoanthocyanidin + NADP(+) = a (2R,3R)-dihydroflavonol + NADPH + H(+). The enzyme catalyses (2S)-flavan-4-ol + NADP(+) = (2S)-flavanone + NADPH + H(+). It functions in the pathway pigment biosynthesis; anthocyanin biosynthesis. Bifunctional enzyme involved in flavonoid metabolism. This chain is Dihydroflavonol 4-reductase (DFR1), found in Medicago sativa (Alfalfa).